We begin with the raw amino-acid sequence, 210 residues long: Chloramphenicol acetyltransferase (210 aa).

The active site involves His79.

Belongs to the transferase hexapeptide repeat family.

The catalysed reaction is chloramphenicol + acetyl-CoA = chloramphenicol 3-acetate + CoA. Functionally, this enzyme is an effector of chloramphenicol resistance in bacteria. The sequence is that of Chloramphenicol acetyltransferase (catB4) from Klebsiella aerogenes (Enterobacter aerogenes).